Here is a 459-residue protein sequence, read N- to C-terminus: Siroheme synthase (459 aa).

The interval 1–204 (MDHLPIFCQL…ADEKAVNATT (204 aa)) is precorrin-2 dehydrogenase /sirohydrochlorin ferrochelatase. NAD(+) is bound by residues 22-23 (DV) and 43-44 (LT). Position 128 is a phosphoserine (Ser-128). The interval 216-459 (GEVVLVGAGP…KLNWFSNYYD (244 aa)) is uroporphyrinogen-III C-methyltransferase. Residue Pro-225 coordinates S-adenosyl-L-methionine. The active-site Proton acceptor is Asp-248. Lys-270 (proton donor) is an active-site residue. Residues 301 to 303 (GGD), Ile-306, 331 to 332 (TA), Met-382, and Gly-411 contribute to the S-adenosyl-L-methionine site.

The protein in the N-terminal section; belongs to the precorrin-2 dehydrogenase / sirohydrochlorin ferrochelatase family. It in the C-terminal section; belongs to the precorrin methyltransferase family.

The enzyme catalyses uroporphyrinogen III + 2 S-adenosyl-L-methionine = precorrin-2 + 2 S-adenosyl-L-homocysteine + H(+). It carries out the reaction precorrin-2 + NAD(+) = sirohydrochlorin + NADH + 2 H(+). The catalysed reaction is siroheme + 2 H(+) = sirohydrochlorin + Fe(2+). It participates in cofactor biosynthesis; adenosylcobalamin biosynthesis; precorrin-2 from uroporphyrinogen III: step 1/1. The protein operates within cofactor biosynthesis; adenosylcobalamin biosynthesis; sirohydrochlorin from precorrin-2: step 1/1. It functions in the pathway porphyrin-containing compound metabolism; siroheme biosynthesis; precorrin-2 from uroporphyrinogen III: step 1/1. Its pathway is porphyrin-containing compound metabolism; siroheme biosynthesis; siroheme from sirohydrochlorin: step 1/1. It participates in porphyrin-containing compound metabolism; siroheme biosynthesis; sirohydrochlorin from precorrin-2: step 1/1. Its function is as follows. Multifunctional enzyme that catalyzes the SAM-dependent methylations of uroporphyrinogen III at position C-2 and C-7 to form precorrin-2 via precorrin-1. Then it catalyzes the NAD-dependent ring dehydrogenation of precorrin-2 to yield sirohydrochlorin. Finally, it catalyzes the ferrochelation of sirohydrochlorin to yield siroheme. In Salmonella agona (strain SL483), this protein is Siroheme synthase.